A 417-amino-acid polypeptide reads, in one-letter code: Probable pectate lyase 20 (417 aa).

Positions 1 to 25 (MAVTQILVVFASALLLSMFFTGVDS) are cleaved as a signal peptide. N-linked (GlcNAc...) asparagine glycans are attached at residues Asn-29 and Asn-53. Ca(2+) contacts are provided by Asp-215, Asp-239, and Asp-243. The active site involves Arg-295.

This sequence belongs to the polysaccharide lyase 1 family. It depends on Ca(2+) as a cofactor.

It catalyses the reaction Eliminative cleavage of (1-&gt;4)-alpha-D-galacturonan to give oligosaccharides with 4-deoxy-alpha-D-galact-4-enuronosyl groups at their non-reducing ends.. It functions in the pathway glycan metabolism; pectin degradation; 2-dehydro-3-deoxy-D-gluconate from pectin: step 2/5. In Arabidopsis thaliana (Mouse-ear cress), this protein is Probable pectate lyase 20.